We begin with the raw amino-acid sequence, 262 residues long: MPAFPLLAVDIGNTTTVLGLADASGALTHTWRIRTNREMLPDDLALQLHGLFTLAGAPIPRAAVLSSVAPPVGENYALALKRHFMIDAFAVSAENLPDVTVELDTPGSVGADRLCNLFGAEKYLGGLDYAVVVDFGTSTNFDVVGRGRRFLGGILATGAQVSADALFARAAKLPRITLQAPETAIGKNTVHALQSGLVFGYAEMVDGLLRRIRAELPGEAVAVATGGFSRTVQGICQEIDYYDETLTLRGLVELWASRSEVR.

10-17 lines the ATP pocket; the sequence is DIGNTTTV. Residue 110–113 participates in substrate binding; it reads GADR. The Proton acceptor role is filled by Asp-112. Asp-134 is a binding site for K(+). Thr-137 serves as a coordination point for ATP. Thr-189 contributes to the substrate binding site.

It belongs to the type III pantothenate kinase family. Homodimer. NH4(+) is required as a cofactor. K(+) serves as cofactor.

The protein resides in the cytoplasm. The catalysed reaction is (R)-pantothenate + ATP = (R)-4'-phosphopantothenate + ADP + H(+). It participates in cofactor biosynthesis; coenzyme A biosynthesis; CoA from (R)-pantothenate: step 1/5. Its function is as follows. Catalyzes the phosphorylation of pantothenate (Pan), the first step in CoA biosynthesis. In Deinococcus radiodurans (strain ATCC 13939 / DSM 20539 / JCM 16871 / CCUG 27074 / LMG 4051 / NBRC 15346 / NCIMB 9279 / VKM B-1422 / R1), this protein is Type III pantothenate kinase.